The primary structure comprises 287 residues: Elongation factor Ts (287 aa).

Residues 80–83 (TDFL) are involved in Mg(2+) ion dislocation from EF-Tu.

The protein belongs to the EF-Ts family.

It localises to the cytoplasm. Associates with the EF-Tu.GDP complex and induces the exchange of GDP to GTP. It remains bound to the aminoacyl-tRNA.EF-Tu.GTP complex up to the GTP hydrolysis stage on the ribosome. The polypeptide is Elongation factor Ts (Stutzerimonas stutzeri (strain A1501) (Pseudomonas stutzeri)).